The following is a 205-amino-acid chain: MVDEQLRPRGVEAQAVLAAMAKVPRHRFVPPPYTRLAYEDRPLPIGHSQTISQPFIVAYMSEAARITPGAKVLEIGTGSGYQAAVLAEMGAEVYTVEIVPELAKRAERTLEELGYRSVRVRSGDGYQGWPQHAPFDAIVVTAAPERIPQPLIDQLAVNGRLIVPVGTQTEDQRMTVLTRTPGGIVEQKTFPVRFVPLTREKPQEH.

Residue Ser-52 is part of the active site.

This sequence belongs to the methyltransferase superfamily. L-isoaspartyl/D-aspartyl protein methyltransferase family.

It is found in the cytoplasm. The catalysed reaction is [protein]-L-isoaspartate + S-adenosyl-L-methionine = [protein]-L-isoaspartate alpha-methyl ester + S-adenosyl-L-homocysteine. Its function is as follows. Catalyzes the methyl esterification of L-isoaspartyl residues in peptides and proteins that result from spontaneous decomposition of normal L-aspartyl and L-asparaginyl residues. It plays a role in the repair and/or degradation of damaged proteins. The polypeptide is Protein-L-isoaspartate O-methyltransferase (Gloeobacter violaceus (strain ATCC 29082 / PCC 7421)).